The following is a 419-amino-acid chain: MIDYERSNTTKNINTHHHNPPPSSSSSDLLPDGNGTAVTQKRKRRPAGTPDPEAEVVSLSPRTLLESDRYVCEICNQGFQRDQNLQMHRRRHKVPWKLLKRETNEEVRKRVYVCPEPTCLHHNPCHALGDLVGIKKHFRRKHSNHKQWICERCSKGYAVQSDYKAHLKTCGTRGHSCDCGRVFSRVESFIEHQDTCTVRRSQPSNHRLHEQQQHTTNATQTASTAENNENGDLSIGPILPGHPLQRRQSPPSEQQPSTLLYPFVTNGSIELQLLPSRNCADETSLSLSIGTMDQKTMSEVEKKSYEKGETSLEREEARRETKRQIEIAELEFAEAKRIRQHARAELHKAHLFREEASRRISATMMQITCHNCKQHFQAPAALVPPPPQTHCTDESTSLAVSYMSSATTEGEKASDRASS.

A disordered region spans residues 1–58 (MIDYERSNTTKNINTHHHNPPPSSSSSDLLPDGNGTAVTQKRKRRPAGTPDPEAEVVS). 3 C2H2-type zinc fingers span residues 70 to 92 (YVCE…RRRH), 112 to 142 (YVCP…RRKH), and 148 to 175 (WICE…TRGH). C150, C153, H166, C170, C177, C179, H192, and C196 together coordinate Zn(2+). The segment at 175 to 198 (HSCDCGRVFSRVESFIEHQDTCTV) adopts a CCHC-type 2; atypical zinc-finger fold. The segment at 185-197 (RVESFIEHQDTCT) is SHR-binding. Disordered regions lie at residues 200–259 (RSQP…PSTL) and 298–318 (SEVE…EEAR). 2 stretches are compositionally biased toward low complexity: residues 213 to 230 (QHTT…NNEN) and 246 to 259 (RRQS…PSTL). Residues 313–349 (EREEARRETKRQIEIAELEFAEAKRIRQHARAELHKA) are a coiled coil.

In terms of assembly, homo- and heterodimer of IDD14alpha and IDD14beta. As to expression, expressed in cotyledons and the vasculature of reosette leaves. Weak expression in hypocotyls and floral organs, but not detected in roots and inflorescence stems.

It is found in the nucleus. In terms of biological role, transcription factor regulating starch metabolism by binding directly to the promoter of QQS. The IDD14beta isoform attenuates the transcription factor activity by competitively forming heterodimers with reduced DNA-binding capacity. Regulates lateral organ morphogenesis and gravitropic responses. Has a redundant role with IDD16 in directing leaf and floral organ morphogenesis. Involved in the establishment of auxin gradients through the regulation of auxin biosynthesis and transport. This Arabidopsis thaliana (Mouse-ear cress) protein is Protein indeterminate-domain 14.